The primary structure comprises 563 residues: Proton channel OTOP2 (563 aa).

The disordered stretch occupies residues 1-20 (MSEELVPHPNESLPGPRASP). Helical transmembrane passes span 30–50 (LLSV…ISGG), 62–82 (VFAL…FYLL), 100–120 (PIWL…MDVF), 137–157 (ILHP…LWIS), 173–193 (LMFT…DESV), 242–262 (FYLY…LYVM), 290–310 (FFAG…VFIL), 325–345 (ALVI…LVSL), 373–393 (LMGA…AVVV), 403–423 (LNLS…VFII), 496–516 (DISL…AFGA), and 528–548 (FYGY…GIFY).

Belongs to the otopetrin family. As to expression, expressed at higher level in stomach, testis and olfactory bulb.

It localises to the cell membrane. The catalysed reaction is H(+)(in) = H(+)(out). Actives at neutral and alkaline extracellular pH, acid extracellular pH appears to inhibit the channel. Insensitive to activation by Zn(2+). Functionally, proton-selective ion channel open at neutral pH. Actives at neutral and alkaline extracellular pH, likely participates in some alkali-related physiological activities. The sequence is that of Proton channel OTOP2 from Mus musculus (Mouse).